The chain runs to 547 residues: Threonine synthase (547 aa).

N6-(pyridoxal phosphate)lysine is present on K117. 5 residues coordinate pyridoxal 5'-phosphate: G272, N273, F274, D276, and T471.

The protein belongs to the threonine synthase family. It depends on pyridoxal 5'-phosphate as a cofactor.

It catalyses the reaction O-phospho-L-homoserine + H2O = L-threonine + phosphate. Its pathway is amino-acid biosynthesis; L-threonine biosynthesis; L-threonine from L-aspartate: step 5/5. In terms of biological role, catalyzes the gamma-elimination of phosphate from L-phosphohomoserine and the beta-addition of water to produce L-threonine. The sequence is that of Threonine synthase from Cryptococcus neoformans var. grubii serotype A (strain H99 / ATCC 208821 / CBS 10515 / FGSC 9487) (Filobasidiella neoformans var. grubii).